A 295-amino-acid polypeptide reads, in one-letter code: Pyridoxal 5'-phosphate synthase subunit PdxS (295 aa).

Asp-25 contributes to the D-ribose 5-phosphate binding site. Lys-82 (schiff-base intermediate with D-ribose 5-phosphate) is an active-site residue. Gly-154 is a binding site for D-ribose 5-phosphate. Arg-166 is a binding site for D-glyceraldehyde 3-phosphate. D-ribose 5-phosphate contacts are provided by residues Gly-215 and 236–237 (GS).

The protein belongs to the PdxS/SNZ family. In the presence of PdxT, forms a dodecamer of heterodimers.

It catalyses the reaction aldehydo-D-ribose 5-phosphate + D-glyceraldehyde 3-phosphate + L-glutamine = pyridoxal 5'-phosphate + L-glutamate + phosphate + 3 H2O + H(+). The protein operates within cofactor biosynthesis; pyridoxal 5'-phosphate biosynthesis. In terms of biological role, catalyzes the formation of pyridoxal 5'-phosphate from ribose 5-phosphate (RBP), glyceraldehyde 3-phosphate (G3P) and ammonia. The ammonia is provided by the PdxT subunit. Can also use ribulose 5-phosphate and dihydroxyacetone phosphate as substrates, resulting from enzyme-catalyzed isomerization of RBP and G3P, respectively. This is Pyridoxal 5'-phosphate synthase subunit PdxS from Staphylococcus aureus (strain Mu3 / ATCC 700698).